Consider the following 99-residue polypeptide: Nucleoid-associated protein Cj1642 (99 aa).

Belongs to the YbaB/EbfC family. In terms of assembly, homodimer.

It localises to the cytoplasm. Its subcellular location is the nucleoid. Functionally, binds to DNA and alters its conformation. May be involved in regulation of gene expression, nucleoid organization and DNA protection. The polypeptide is Nucleoid-associated protein Cj1642 (Campylobacter jejuni subsp. jejuni serotype O:2 (strain ATCC 700819 / NCTC 11168)).